The chain runs to 422 residues: ATP-dependent RNA helicase RhlB (422 aa).

The Q motif motif lies at 9–37; sequence QKFSDFALHPLVIKAIENQGFYHCTPIQA. Residues 40 to 219 enclose the Helicase ATP-binding domain; sequence FPITLAGRDV…FEQMNHPEYI (180 aa). Residue 53 to 60 participates in ATP binding; it reads AQTGTGKT. Positions 165–168 match the DEAD box motif; that stretch reads DEAD. Positions 245–390 constitute a Helicase C-terminal domain; the sequence is RLLQTLIEEE…TSEYNKEALL (146 aa). Residues 394–422 are disordered; it reads PQPKRLQRHHRHYAGSRNQGASRKPRSPQ. Over residues 398–407 the composition is skewed to basic residues; sequence RLQRHHRHYA.

Belongs to the DEAD box helicase family. RhlB subfamily. In terms of assembly, component of the RNA degradosome, which is a multiprotein complex involved in RNA processing and mRNA degradation.

It is found in the cytoplasm. It catalyses the reaction ATP + H2O = ADP + phosphate + H(+). DEAD-box RNA helicase involved in RNA degradation. Has RNA-dependent ATPase activity and unwinds double-stranded RNA. This chain is ATP-dependent RNA helicase RhlB, found in Hamiltonella defensa subsp. Acyrthosiphon pisum (strain 5AT).